Consider the following 376-residue polypeptide: UDP-N-acetylenolpyruvoylglucosamine reductase (376 aa).

Residues 48-219 (VGGPARHLVI…LDVTMQFNLG (172 aa)) enclose the FAD-binding PCMH-type domain. Arg-196 is a catalytic residue. Residue Ser-274 is the Proton donor of the active site. The active site involves Glu-368.

The protein belongs to the MurB family. It depends on FAD as a cofactor.

The protein localises to the cytoplasm. The catalysed reaction is UDP-N-acetyl-alpha-D-muramate + NADP(+) = UDP-N-acetyl-3-O-(1-carboxyvinyl)-alpha-D-glucosamine + NADPH + H(+). It participates in cell wall biogenesis; peptidoglycan biosynthesis. Cell wall formation. The polypeptide is UDP-N-acetylenolpyruvoylglucosamine reductase (Cutibacterium acnes (strain DSM 16379 / KPA171202) (Propionibacterium acnes)).